A 145-amino-acid chain; its full sequence is Large ribosomal subunit protein uL16 (145 aa).

A compositionally biased stretch (basic and acidic residues) spans 76 to 95 (PKTKTPAETRMGKGKGEPEH). A disordered region spans residues 76-97 (PKTKTPAETRMGKGKGEPEHFV).

The protein belongs to the universal ribosomal protein uL16 family. In terms of assembly, part of the 50S ribosomal subunit.

In terms of biological role, binds 23S rRNA and is also seen to make contacts with the A and possibly P site tRNAs. The protein is Large ribosomal subunit protein uL16 of Salinibacter ruber (strain DSM 13855 / M31).